The following is a 211-amino-acid chain: BAG family molecular chaperone regulator 2 (211 aa).

Ala2 is modified (N-acetylalanine). Phosphoserine is present on residues Ser20, Ser31, and Ser73. Residues 20-61 are a coiled coil; sequence SMADRSSRLLESLDQLELRVEALREAATAVEQEKEVLLEMIH. Residues 109-189 form the BAG domain; the sequence is SLKHATRIID…NIENADKAIK (81 aa).

As to quaternary structure, binds to the ATPase domain of HSP/HSC70 chaperones. May interact with NWD1. Interacts with HSPA1A (via NBD), HSPA1B (via NBD) and HSPA8. May interact with DNJC9; the interaction seems to be histone-dependent.

Its function is as follows. Co-chaperone for HSP70 and HSC70 chaperone proteins. Acts as a nucleotide-exchange factor (NEF) promoting the release of ADP from the HSP70 and HSC70 proteins thereby triggering client/substrate protein release. This Bos taurus (Bovine) protein is BAG family molecular chaperone regulator 2.